Consider the following 73-residue polypeptide: Translation initiation factor IF-1 (73 aa).

Residues 1–72 (MPKKDAIEVE…TRGRVTYRFK (72 aa)) form the S1-like domain.

This sequence belongs to the IF-1 family. Component of the 30S ribosomal translation pre-initiation complex which assembles on the 30S ribosome in the order IF-2 and IF-3, IF-1 and N-formylmethionyl-tRNA(fMet); mRNA recruitment can occur at any time during PIC assembly.

The protein resides in the cytoplasm. Functionally, one of the essential components for the initiation of protein synthesis. Stabilizes the binding of IF-2 and IF-3 on the 30S subunit to which N-formylmethionyl-tRNA(fMet) subsequently binds. Helps modulate mRNA selection, yielding the 30S pre-initiation complex (PIC). Upon addition of the 50S ribosomal subunit IF-1, IF-2 and IF-3 are released leaving the mature 70S translation initiation complex. The chain is Translation initiation factor IF-1 from Dehalococcoides mccartyi (strain ATCC BAA-2266 / KCTC 15142 / 195) (Dehalococcoides ethenogenes (strain 195)).